The primary structure comprises 443 residues: MSKLNMTPREIVAYLDEYIIGQKEAKKSIAIAFRNRYRRLQLEKSLQEEITPKNILMIGSTGVGKTEIARRIAKIMELPFVKVEASKYTEVGFVGRDVESMVRDLVNNSVLLVENEHKEKLKDKIEEAVIEKIAKKLLPPLPNGVSEEKKQEYANSLLKMQQRIAQGELDSREIEIEVRKKSIEIDSNVPPEILRVQENLIKVFHKEQDKVKKTLSVKEAKEALKAEISDTLLDSEAIKMEGLKRAESSGVIFIDEIDKIAVSSKEGSRQDPSKEGVQRDLLPIVEGSVVNTKYGSIKTEHILFIAAGAFHLSKPSDLIPELQGRFPLRVELENLTEEIMYMILTQTKTSIIKQYQALLKVEGVEIAFEDDAIKELAKLSYNANQKSEDIGARRLHTTIEKVLEDISFEAEDYSGQNVTITKELVQSKLEDLVADENLVKYIL.

Residues I20, G62–E67, D255, E321, and R393 each bind ATP.

It belongs to the ClpX chaperone family. HslU subfamily. In terms of assembly, a double ring-shaped homohexamer of HslV is capped on each side by a ring-shaped HslU homohexamer. The assembly of the HslU/HslV complex is dependent on binding of ATP.

Its subcellular location is the cytoplasm. Its function is as follows. ATPase subunit of a proteasome-like degradation complex; this subunit has chaperone activity. The binding of ATP and its subsequent hydrolysis by HslU are essential for unfolding of protein substrates subsequently hydrolyzed by HslV. HslU recognizes the N-terminal part of its protein substrates and unfolds these before they are guided to HslV for hydrolysis. This chain is ATP-dependent protease ATPase subunit HslU, found in Helicobacter pylori (strain ATCC 700392 / 26695) (Campylobacter pylori).